Here is a 459-residue protein sequence, read N- to C-terminus: Cyclic GMP-AMP synthase-like receptor 2 (459 aa).

ATP contacts are provided by residues S68 and 79–81 (EFD). Mg(2+) contacts are provided by E79, D81, and D199. GTP is bound by residues D199 and 248 to 255 (RSSFYAVE). An ATP-binding site is contributed by 252-255 (YAVE). H263 lines the Zn(2+) pocket. ATP contacts are provided by residues K274 and 288–292 (SYYIK).

This sequence belongs to the mab-21 family. It depends on Mg(2+) as a cofactor. The cofactor is Mn(2+).

The catalysed reaction is GTP + ATP = 3',2'-cGAMP + 2 diphosphate. The enzyme catalyses GTP + ATP = 2',3'-cGAMP + 2 diphosphate. It catalyses the reaction GTP + ATP = pppGp(2'-5')A + diphosphate. It carries out the reaction pppA(2'-5')pG = 3',2'-cGAMP + diphosphate. The catalysed reaction is pppGp(2'-5')A = 2',3'-cGAMP + diphosphate. With respect to regulation, the enzyme activity is specifically activated by some nucleic acid. Functionally, nucleotidyltransferase that catalyzes the formation of cyclic GMP-AMP from ATP and GTP and plays a key role in antiviral innate immunity. Directly binds some unknown nucleic acid, activating the nucleotidyltransferase activity, leading to synthesis of both 3',2'-cGAMP and 2',3'-cGAMP second messengers. 3',2'-cGAMP and 2',3'-cGAMP bind to and activate Sting, thereby triggering the antiviral immune response via activation of the NF-kappa-B transcription factor Rel (Relish). The chain is Cyclic GMP-AMP synthase-like receptor 2 from Drosophila melanogaster (Fruit fly).